Here is a 1897-residue protein sequence, read N- to C-terminus: uncharacterized protein (1897 aa).

Residues 1661–1888 (SDERVKTNIR…AKVISLESRL (228 aa)) form the Peptidase S74 domain. The stretch at 1865–1894 (AALQEIDRQLQLEKAKVISLESRLSALELK) forms a coiled coil.

This is an uncharacterized protein from Micromonas pusilla (Picoplanktonic green alga).